The following is a 135-amino-acid chain: Large-conductance mechanosensitive channel (135 aa).

2 consecutive transmembrane segments (helical) span residues 10–30 (FAMKGNVVDMAVGVIIGAAFG) and 76–96 (GAFIQTVFDFAIVAFAIFCAI).

This sequence belongs to the MscL family. As to quaternary structure, homopentamer.

It is found in the cell inner membrane. Channel that opens in response to stretch forces in the membrane lipid bilayer. May participate in the regulation of osmotic pressure changes within the cell. The protein is Large-conductance mechanosensitive channel of Proteus mirabilis (strain HI4320).